Here is a 255-residue protein sequence, read N- to C-terminus: D-aminoacyl-tRNA deacylase (255 aa).

The protein belongs to the DtdA deacylase family. In terms of assembly, monomer. The cofactor is Zn(2+).

The enzyme catalyses a D-aminoacyl-tRNA + H2O = a tRNA + a D-alpha-amino acid + H(+). The catalysed reaction is glycyl-tRNA(Ala) + H2O = tRNA(Ala) + glycine + H(+). D-aminoacyl-tRNA deacylase with broad substrate specificity. By recycling D-aminoacyl-tRNA to D-amino acids and free tRNA molecules, this enzyme counteracts the toxicity associated with the formation of D-aminoacyl-tRNA entities in vivo. In Picrophilus torridus (strain ATCC 700027 / DSM 9790 / JCM 10055 / NBRC 100828 / KAW 2/3), this protein is D-aminoacyl-tRNA deacylase.